The chain runs to 445 residues: Histidine--tRNA ligase (445 aa).

This sequence belongs to the class-II aminoacyl-tRNA synthetase family. In terms of assembly, homodimer.

The protein resides in the cytoplasm. The catalysed reaction is tRNA(His) + L-histidine + ATP = L-histidyl-tRNA(His) + AMP + diphosphate + H(+). The protein is Histidine--tRNA ligase of Mycoplasma mobile (strain ATCC 43663 / 163K / NCTC 11711) (Mesomycoplasma mobile).